We begin with the raw amino-acid sequence, 266 residues long: Protein STAY-GREEN homolog, chloroplastic (266 aa).

The N-terminal 50 residues, 1–50 (MGTLTASLVAPSKLNPEKHSSLFVYKTRRKSHKNQSIVPVARLFGPAIFE), are a transit peptide targeting the chloroplast.

The protein belongs to the staygreen family.

It is found in the plastid. It localises to the chloroplast. In terms of biological role, required to trigger chlorophyll degradation during leaf senescence and fruit ripening. The protein is Protein STAY-GREEN homolog, chloroplastic of Capsicum annuum (Capsicum pepper).